A 185-amino-acid chain; its full sequence is Transcription termination/antitermination protein NusG (185 aa).

Residues 134–162 (PGQMVRVIDGPFNDFDGLVEEVNYEKNRL) form the KOW domain.

This sequence belongs to the NusG family.

Functionally, participates in transcription elongation, termination and antitermination. This chain is Transcription termination/antitermination protein NusG, found in Xylella fastidiosa (strain 9a5c).